We begin with the raw amino-acid sequence, 180 residues long: NADH-quinone oxidoreductase subunit I (180 aa).

4Fe-4S ferredoxin-type domains follow at residues 48–80 and 90–119; these read IVLTRDPDGQERCVACNLCAVACPVGCISLQKA and EFFRINFSRCIFCGMCEEACPTTAIQLTPD. Cysteine 60, cysteine 63, cysteine 66, cysteine 70, cysteine 99, cysteine 102, cysteine 105, and cysteine 109 together coordinate [4Fe-4S] cluster.

It belongs to the complex I 23 kDa subunit family. In terms of assembly, NDH-1 is composed of 13 different subunits. Subunits NuoA, H, J, K, L, M, N constitute the membrane sector of the complex. It depends on [4Fe-4S] cluster as a cofactor.

The protein localises to the cell inner membrane. It catalyses the reaction a quinone + NADH + 5 H(+)(in) = a quinol + NAD(+) + 4 H(+)(out). Its function is as follows. NDH-1 shuttles electrons from NADH, via FMN and iron-sulfur (Fe-S) centers, to quinones in the respiratory chain. The immediate electron acceptor for the enzyme in this species is believed to be ubiquinone. Couples the redox reaction to proton translocation (for every two electrons transferred, four hydrogen ions are translocated across the cytoplasmic membrane), and thus conserves the redox energy in a proton gradient. This is NADH-quinone oxidoreductase subunit I from Cronobacter sakazakii (strain ATCC BAA-894) (Enterobacter sakazakii).